A 568-amino-acid chain; its full sequence is Urease subunit alpha (568 aa).

One can recognise a Urease domain in the interval 130–568 (GGIDTHIHFI…LPMAQRYFLF (439 aa)). Ni(2+) contacts are provided by His135, His137, and Lys218. The residue at position 218 (Lys218) is an N6-carboxylysine. A substrate-binding site is contributed by His220. Residues His247 and His273 each coordinate Ni(2+). Catalysis depends on His321, which acts as the Proton donor. Asp361 serves as a coordination point for Ni(2+).

This sequence belongs to the metallo-dependent hydrolases superfamily. Urease alpha subunit family. As to quaternary structure, heterotrimer of UreA (gamma), UreB (beta) and UreC (alpha) subunits. Three heterotrimers associate to form the active enzyme. The cofactor is Ni cation. Post-translationally, carboxylation allows a single lysine to coordinate two nickel ions.

It localises to the cytoplasm. It catalyses the reaction urea + 2 H2O + H(+) = hydrogencarbonate + 2 NH4(+). The protein operates within nitrogen metabolism; urea degradation; CO(2) and NH(3) from urea (urease route): step 1/1. The protein is Urease subunit alpha of Burkholderia pseudomallei (strain 668).